A 460-amino-acid polypeptide reads, in one-letter code: Lipase member I (460 aa).

The N-terminal stretch at 1–15 (MRVYIFLCLMCWVRS) is a signal peptide. A glycan (N-linked (GlcNAc...) asparagine) is linked at Asn63. Ser159 functions as the Nucleophile in the catalytic mechanism. Catalysis depends on Asp183, which acts as the Charge relay system. A disulfide bond links Cys238 and Cys251. His253 (charge relay system) is an active-site residue. 2 cysteine pairs are disulfide-bonded: Cys275–Cys286 and Cys289–Cys297. Asn396 carries an N-linked (GlcNAc...) asparagine glycan. The cysteines at positions 436 and 455 are disulfide-linked.

Belongs to the AB hydrolase superfamily. Lipase family. Interacts with heparin with a high affinity. In terms of tissue distribution, expressed in testis. Expressed exclusively at the connecting piece of the sperm.

The protein localises to the cell membrane. The protein resides in the secreted. The catalysed reaction is 1-hexadecanoyl-2-(9Z-octadecenoyl)-sn-glycero-3-phosphate + H2O = 2-(9Z-octadecenoyl)-sn-glycero-3-phosphate + hexadecanoate + H(+). Its activity is regulated as follows. Inhibited by sodium vanadate. Its function is as follows. Hydrolyzes specifically phosphatidic acid (PA) to produce 2-acyl lysophosphatidic acid (LPA; a potent bioactive lipid mediator) and fatty acid. Does not hydrolyze other phospholipids, like phosphatidylserine (PS), phosphatidylcholine (PC) and phosphatidylethanolamine (PE) or triacylglycerol (TG). The chain is Lipase member I (LIPI) from Homo sapiens (Human).